Consider the following 325-residue polypeptide: mRNA decay activator protein ZFP36 (325 aa).

Residues 1–15 (MDLAAIYKSLLSLSP) form a necessary for nuclear export region. Residues 1–98 (MDLAAIYKSL…PTSPTATPTT (98 aa)) are necessary and sufficient for the association with mRNA decay enzymes and mRNA decay activation. Necessary for localization of ARE-containing mRNAs to processing bodies (PBs) regions lie at residues 1 to 172 (MDLA…DLAA) and 98 to 325 (TSSR…SVSE). The segment covering 15-48 (PELPSDLGETESSTSWASSGPWSLSSSDSSLPEA) has biased composition (low complexity). The segment at 15 to 101 (PELPSDLGET…PTATPTTSSR (87 aa)) is disordered. A Phosphoserine; by MAPKAPK2 modification is found at serine 58. Phosphoserine is present on serine 64. Residues 69-73 (PPPPG) form a P-P-P-P-G repeat. Positions 75-101 (APLAPRPSSELSPSPTSPTATPTTSSR) are enriched in low complexity. Residues serine 86 and serine 88 each carry the phosphoserine modification. Threonine 90 carries the phosphothreonine modification. Serine 91 carries the phosphoserine modification. A necessary for nuclear localization region spans residues 93-166 (TATPTTSSRY…GSRCHFIHNP (74 aa)). The segment at 95–171 (TPTTSSRYKT…FIHNPSEDLA (77 aa)) is necessary for RNA-binding. C3H1-type zinc fingers lie at residues 101–129 (RYKT…HGLG) and 139–167 (KYKT…HNPS). The tract at residues 101–192 (RYKTELCRTF…ISFSGLPSGR (92 aa)) is necessary for interaction with PABPN1. Serine 167 is modified (phosphoserine). The interval 172–325 (APGHPHVLRQ…PIFNRISVSE (154 aa)) is necessary for mRNA decay activation. Serine 184 is modified (phosphoserine; by MAPKAPK2). 2 disordered regions span residues 185–248 (FSGL…TPAC) and 260–325 (VWGP…SVSE). Serine 195 bears the Phosphoserine mark. A P-P-P-P-G repeat occupies 196-200 (PPPAS). The segment covering 204–214 (PSVPSWSFSPS) has biased composition (low complexity). Phosphoserine is present on serine 216. A P-P-P-P-G repeat occupies 217–222 (PPPPPG). Position 227 is a phosphoserine; by MAPK1; in vitro (serine 227). A phosphoserine mark is found at serine 275, serine 295, and serine 322. A compositionally biased stretch (low complexity) spans 285–295 (SSGSSLGGSDS). Positions 311 to 325 (APRRLPIFNRISVSE) are interaction with CNOT1.

As to quaternary structure, associates with cytoplasmic CCR4-NOT and PAN2-PAN3 deadenylase complexes to trigger ARE-containing mRNA deadenylation and decay processes. Part of a mRNA decay activation complex at least composed of poly(A)-specific exoribonucleases CNOT6, EXOSC2 and XRN1 and mRNA-decapping enzymes DCP1A and DCP2. Associates with the RNA exosome complex. Interacts (via phosphorylated form) with 14-3-3 proteins; these interactions promote exclusion of ZFP36 from cytoplasmic stress granules in response to arsenite treatment in a MAPKAPK2-dependent manner and does not prevent CCR4-NOT deadenylase complex recruitment or ZFP36-induced ARE-containing mRNA deadenylation and decay processes. Interacts with 14-3-3 proteins; these interactions occur in response to rapamycin in an Akt-dependent manner. Interacts with AGO2 and AGO4. Interacts (via C-terminus) with CNOT1; this interaction occurs in a RNA-independent manner and induces mRNA deadenylation. Interacts (via N-terminus) with CNOT6. Interacts with CNOT6L. Interacts (via C-terminus) with CNOT7; this interaction occurs in a RNA-independent manner, induces mRNA deadenylation and is inhibited in a phosphorylation MAPKAPK2-dependent manner. Interacts (via unphosphorylated form) with CNOT8; this interaction occurs in a RNA-independent manner and is inhibited in a phosphorylation MAPKAPK2-dependent manner. Interacts with DCP1A. Interacts (via N-terminus) with DCP2. Interacts with EDC3. Interacts (via N-terminus) with EXOSC2. Interacts with heat shock 70 kDa proteins. Interacts with KHSRP; this interaction increases upon cytokine-induced treatment. Interacts with MAP3K4; this interaction enhances the association with SH3KBP1/CIN85. Interacts with MAPKAPK2; this interaction occurs upon skeletal muscle satellite cell activation. Interacts with NCL. Interacts with NUP214; this interaction increases upon lipopolysaccharide (LPS) stimulation. Interacts with PABPC1; this interaction occurs in a RNA-dependent manner. Interacts (via hypophosphorylated form) with PABPN1 (via RRM domain and C-terminal arginine-rich region); this interaction occurs in the nucleus in a RNA-independent manner, decreases in presence of single-stranded poly(A) RNA-oligomer and in a p38 MAPK-dependent-manner and inhibits nuclear poly(A) tail synthesis. Interacts with PAN2. Interacts (via C3H1-type zinc finger domains) with PKM. Interacts (via C3H1-type zinc finger domains) with nuclear RNA poly(A) polymerase. Interacts with PPP2CA; this interaction occurs in LPS-stimulated cells and induces ZFP36 dephosphorylation, and hence may promote ARE-containing mRNAs decay. Interacts (via C-terminus) with PRR5L (via C-terminus); this interaction may accelerate ZFP36-mediated mRNA decay during stress. Interacts (via C-terminus) with SFN; this interaction occurs in a phosphorylation-dependent manner. Interacts (via extreme C-terminal region) with SH3KBP1/CIN85 (via SH3 domains); this interaction enhances MAP3K4-induced phosphorylation of ZFP36 at Ser-64 and Ser-91 and does not alter neither ZFP36 binding to ARE-containing transcripts nor TNF-alpha mRNA decay. Interacts with XRN1. Interacts (via C-terminus and Ser-184 phosphorylated form) with YWHAB; this interaction occurs in a p38/MAPKAPK2-dependent manner, increases cytoplasmic localization of ZFP36 and protects ZFP36 from Ser-184 dephosphorylation by serine/threonine phosphatase 2A, and hence may be crucial for stabilizing ARE-containing mRNAs. Interacts (via phosphorylated form) with YWHAE. Interacts (via C-terminus) with YWHAG; this interaction occurs in a phosphorylation-dependent manner. Interacts with YWHAH; this interaction occurs in a phosphorylation-dependent manner. Interacts with YWHAQ; this interaction occurs in a phosphorylation-dependent manner. Interacts with (via C-terminus) YWHAZ; this interaction occurs in a phosphorylation-dependent manner. Does not interact with SH3KBP1. Interacts (via P-P-P-P-G repeats) with GIGYF2; the interaction is direct. Post-translationally, phosphorylated. Phosphorylation at serine and/or threonine residues occurs in a p38 MAPK- and MAPKAPK2-dependent manner. Phosphorylated by MAPKAPK2 at Ser-58 and Ser-184; phosphorylation increases its stability and cytoplasmic localization, promotes binding to 14-3-3 adapter proteins and inhibits the recruitment of cytoplasmic CCR4-NOT and PAN2-PAN3 deadenylase complexes to the mRNA decay machinery, thereby inhibiting ZFP36-induced ARE-containing mRNA deadenylation and decay processes. Phosphorylation by MAPKAPK2 does not impair ARE-containing RNA-binding. Phosphorylated in a MAPKAPK2- and p38 MAPK-dependent manner upon skeletal muscle satellite cell activation; this phosphorylation inhibits ZFP36-mediated mRNA decay activity, and hence stabilizes MYOD1 mRNA. Phosphorylated by MAPK1 upon mitogen stimulation. Phosphorylated at Ser-64 and Ser-91; these phosphorylations increase in a SH3KBP1-dependent manner. Phosphorylated at serine and threonine residues in a pyruvate kinase PKM- and p38 MAPK-dependent manner. Phosphorylation at Ser-58 may participate in the PKM-mediated degradation of ZFP36 in a p38 MAPK-dependent manner. Dephosphorylated by serine/threonine phosphatase 2A at Ser-184. Ubiquitinated; pyruvate kinase (PKM)-dependent ubiquitination leads to proteasomal degradation through a p38 MAPK signaling pathway.

Its subcellular location is the nucleus. The protein localises to the cytoplasm. The protein resides in the cytoplasmic granule. It is found in the P-body. Zinc-finger RNA-binding protein that destabilizes numerous cytoplasmic AU-rich element (ARE)-containing mRNA transcripts by promoting their poly(A) tail removal or deadenylation, and hence provide a mechanism for attenuating protein synthesis. Acts as an 3'-untranslated region (UTR) ARE mRNA-binding adapter protein to communicate signaling events to the mRNA decay machinery. Recruits deadenylase CNOT7 (and probably the CCR4-NOT complex) via association with CNOT1, and hence promotes ARE-mediated mRNA deadenylation. Also functions by recruiting components of the cytoplasmic RNA decay machinery to the bound ARE-containing mRNAs. Self regulates by destabilizing its own mRNA. Binds to 3'-UTR ARE of numerous mRNAs. Also binds to ARE of its own mRNA. Plays a role in anti-inflammatory responses; suppresses tumor necrosis factor (TNF)-alpha production by stimulating ARE-mediated TNF-alpha mRNA decay and several other inflammatory ARE-containing mRNAs in interferon (IFN)- and/or lipopolysaccharide (LPS)-induced macrophages. Also plays a role in the regulation of dendritic cell maturation at the post-transcriptional level, and hence operates as part of a negative feedback loop to limit the inflammatory response. Promotes ARE-mediated mRNA decay of hypoxia-inducible factor HIF1A mRNA during the response of endothelial cells to hypoxia. Positively regulates early adipogenesis of preadipocytes by promoting ARE-mediated mRNA decay of immediate early genes (IEGs). Negatively regulates hematopoietic/erythroid cell differentiation by promoting ARE-mediated mRNA decay of the transcription factor STAT5B mRNA. Plays a role in maintaining skeletal muscle satellite cell quiescence by promoting ARE-mediated mRNA decay of the myogenic determination factor MYOD1 mRNA. Also associates with and regulates the expression of non-ARE-containing target mRNAs at the post-transcriptional level, such as MHC class I mRNAs. Participates in association with argonaute RISC catalytic components in the ARE-mediated mRNA decay mechanism; assists microRNA (miRNA) targeting ARE-containing mRNAs. May also play a role in the regulation of cytoplasmic mRNA decapping; enhances decapping of ARE-containing RNAs, in vitro. Involved in the delivery of target ARE-mRNAs to processing bodies (PBs). In addition to its cytosolic mRNA-decay function, affects nuclear pre-mRNA processing. Negatively regulates nuclear poly(A)-binding protein PABPN1-stimulated polyadenylation activity on ARE-containing pre-mRNA during LPS-stimulated macrophages. Also involved in the regulation of stress granule (SG) and P-body (PB) formation and fusion. Plays a role in the regulation of keratinocyte proliferation, differentiation and apoptosis. Plays a role as a tumor suppressor by inhibiting cell proliferation in breast cancer cells. The sequence is that of mRNA decay activator protein ZFP36 from Ovis aries (Sheep).